The chain runs to 246 residues: MIRFLIPTAKEMKPSKEVPSQKLSEKSEAILTEMAKLSTDDLSIAYKIKPEQAEKEKQRWDAILAGEAKNYPAVELFNGLMYRHIKRKDLSTCEKDFLSHQVFITSSFYGIIPAFYPIQEHRHDFHTKVKVNGQSLKNYWRAEYDQFLEEGQVPVVSLLSSEFEDVFSPSLRKQLFTVSFMEDRNGILKTHSTISKKARGAFLTAVMEESCQTIDALRDLSFDDFYYRKDLSSDSELFFVRKVKKV.

Belongs to the UPF0246 family.

In Streptococcus thermophilus (strain ATCC BAA-250 / LMG 18311), this protein is UPF0246 protein stu1967.